The primary structure comprises 177 residues: Ribosome maturation factor RimM (177 aa).

The PRC barrel domain occupies 100–177; it reads EDEYYWSDLV…TVLVAWPSDY (78 aa).

It belongs to the RimM family. In terms of assembly, binds ribosomal protein uS19.

Its subcellular location is the cytoplasm. In terms of biological role, an accessory protein needed during the final step in the assembly of 30S ribosomal subunit, possibly for assembly of the head region. Essential for efficient processing of 16S rRNA. May be needed both before and after RbfA during the maturation of 16S rRNA. It has affinity for free ribosomal 30S subunits but not for 70S ribosomes. The protein is Ribosome maturation factor RimM of Psychrobacter cryohalolentis (strain ATCC BAA-1226 / DSM 17306 / VKM B-2378 / K5).